Reading from the N-terminus, the 417-residue chain is Phosphoglycerate kinase (417 aa).

(2R)-3-phosphoglycerate-binding residues include valine 23, aspartate 24, phenylalanine 25, asparagine 26, glutamine 38, arginine 39, serine 62, histidine 63, glycine 65, arginine 66, leucine 122, arginine 123, histidine 170, and arginine 171. ADP is bound at residue glycine 214. Glycine 214 contributes to the CDP binding site. Residues alanine 215 and lysine 216 each coordinate AMP. Position 215 (alanine 215) interacts with ATP. Residue alanine 215 participates in Mg(2+) binding. Aspartate 219 serves as a coordination point for CDP. Aspartate 219 is a binding site for Mg(2+). Residue lysine 220 coordinates AMP. Lysine 220 provides a ligand contact to ATP. Glycine 238 contacts ADP. Glycine 238 contributes to the CDP binding site. The AMP site is built by glycine 239 and glycine 313. Residues glycine 239 and glycine 313 each coordinate ATP. Residues glycine 338, valine 340, and phenylalanine 343 each coordinate CDP. Phenylalanine 343 serves as a coordination point for ADP. Residue glutamate 344 participates in AMP binding. Residues glutamate 344, aspartate 375, and threonine 376 each contribute to the ATP site. Aspartate 375 provides a ligand contact to Mg(2+).

This sequence belongs to the phosphoglycerate kinase family. As to quaternary structure, monomer. Mg(2+) is required as a cofactor.

The protein localises to the cytoplasm. It catalyses the reaction (2R)-3-phosphoglycerate + ATP = (2R)-3-phospho-glyceroyl phosphate + ADP. The protein operates within carbohydrate degradation; glycolysis; pyruvate from D-glyceraldehyde 3-phosphate: step 2/5. In terms of biological role, catalyzes one of the two ATP producing reactions in the glycolytic pathway via the reversible conversion of 1,3-diphosphoglycerate to 3-phosphoglycerate. In addition to its role as a glycolytic enzyme, it seems that PGK-1 acts as a polymerase alpha cofactor protein (primer recognition protein). May play a role in sperm motility. The chain is Phosphoglycerate kinase (PGK) from Gallus gallus (Chicken).